A 447-amino-acid chain; its full sequence is ATP-dependent protease ATPase subunit HslU (447 aa).

ATP-binding positions include Ile-18, 60–65, Asp-259, Glu-325, and Arg-397; that span reads GVGKTE.

It belongs to the ClpX chaperone family. HslU subfamily. A double ring-shaped homohexamer of HslV is capped on each side by a ring-shaped HslU homohexamer. The assembly of the HslU/HslV complex is dependent on binding of ATP.

It is found in the cytoplasm. Functionally, ATPase subunit of a proteasome-like degradation complex; this subunit has chaperone activity. The binding of ATP and its subsequent hydrolysis by HslU are essential for unfolding of protein substrates subsequently hydrolyzed by HslV. HslU recognizes the N-terminal part of its protein substrates and unfolds these before they are guided to HslV for hydrolysis. This is ATP-dependent protease ATPase subunit HslU from Burkholderia ambifaria (strain ATCC BAA-244 / DSM 16087 / CCUG 44356 / LMG 19182 / AMMD) (Burkholderia cepacia (strain AMMD)).